Here is a 545-residue protein sequence, read N- to C-terminus: Gamma-curcumene synthase (545 aa).

The Mg(2+) site is built by D299, D303, N442, and E450. Positions 299 to 303 (DDTYD) match the DDXXD motif motif.

The protein belongs to the terpene synthase family. Mg(2+) is required as a cofactor.

The protein localises to the cytoplasm. The protein resides in the cytosol. It carries out the reaction (2E,6E)-farnesyl diphosphate = gamma-curcumene + diphosphate. The protein operates within secondary metabolite biosynthesis; terpenoid biosynthesis. Its function is as follows. Sesquiterpene synthase involved in gamma-curcumene biosynthesis. The polypeptide is Gamma-curcumene synthase (Pogostemon cablin (Patchouli)).